The following is a 314-amino-acid chain: Olfactory receptor 9A1 (314 aa).

Topologically, residues 1-24 (MLGNYSSATEFFLLGFPGSQEVCR) are extracellular. N-linked (GlcNAc...) asparagine glycosylation is present at Asn-4. Residues 25 to 45 (ILFATFFLLYAVTVMGNVVII) form a helical membrane-spanning segment. Residues 46 to 64 (ITVCVDKCLQSPIYFFLGH) are Cytoplasmic-facing. A helical transmembrane segment spans residues 65-85 (LCVLEILITSTAVPFMLWGLL). The Extracellular portion of the chain corresponds to 86–99 (LPSTQIMSLTACAA). Residues Cys-97 and Cys-179 are joined by a disulfide bond. Residues 100 to 120 (QLYLYLSLGTLELALMGVMAV) form a helical membrane-spanning segment. Over 121–140 (DRYVAVCNPLRYNIIMNSST) the chain is Cytoplasmic. Residues 141-161 (FIWVIIVSWVLGFLSEIWPVY) traverse the membrane as a helical segment. Topologically, residues 162–196 (ATFQLTFCKSSVLDHFYCDRGQLLKVSCEDTLFRE) are extracellular. Residues 197 to 217 (FILFLMAVFIIIGSLIPTIVS) form a helical membrane-spanning segment. Residues 218-239 (YTYIISTNLKIPSASGWRKSFS) lie on the Cytoplasmic side of the membrane. The helical transmembrane segment at 240–260 (TCASHFTYVVIGYGSCLFLYV) threads the bilayer. Residues 261 to 271 (KPKQTQAAEYN) are Extracellular-facing. A helical transmembrane segment spans residues 272 to 292 (RVVSLLVLVVTPFLNPFIFTL). Residues 293 to 314 (RNDKFIQAFGDGMKHCYKLLKN) are Cytoplasmic-facing.

The protein belongs to the G-protein coupled receptor 1 family.

Its subcellular location is the cell membrane. Odorant receptor. In Homo sapiens (Human), this protein is Olfactory receptor 9A1 (OR9A1P).